Here is a 322-residue protein sequence, read N- to C-terminus: Adenine deaminase (322 aa).

Positions 11, 13, and 189 each coordinate Zn(2+). Glutamate 192 acts as the Proton donor in catalysis. Aspartate 270 is a Zn(2+) binding site. Aspartate 271 contacts substrate.

It belongs to the metallo-dependent hydrolases superfamily. Adenosine and AMP deaminases family. Adenine deaminase type 2 subfamily. Zn(2+) serves as cofactor.

It carries out the reaction adenine + H2O + H(+) = hypoxanthine + NH4(+). Catalyzes the hydrolytic deamination of adenine to hypoxanthine. Plays an important role in the purine salvage pathway and in nitrogen catabolism. The sequence is that of Adenine deaminase from Rhizobium rhizogenes (strain K84 / ATCC BAA-868) (Agrobacterium radiobacter).